Reading from the N-terminus, the 131-residue chain is Transcription antitermination protein NusB (131 aa).

It belongs to the NusB family.

Its function is as follows. Involved in transcription antitermination. Required for transcription of ribosomal RNA (rRNA) genes. Binds specifically to the boxA antiterminator sequence of the ribosomal RNA (rrn) operons. The polypeptide is Transcription antitermination protein NusB (Bacillus subtilis (strain 168)).